Consider the following 456-residue polypeptide: Bifunctional protein GlmU (456 aa).

Positions 1 to 229 (MSNSSMSVVI…LSEVEGVNNR (229 aa)) are pyrophosphorylase. UDP-N-acetyl-alpha-D-glucosamine is bound by residues 11-14 (LAAG), lysine 25, glutamine 76, 81-82 (GT), 103-105 (YGD), glycine 140, glutamate 154, asparagine 169, and asparagine 227. Mg(2+) is bound at residue aspartate 105. Asparagine 227 contributes to the Mg(2+) binding site. Positions 230 to 250 (LQLSALERVFQTEQAEKLLLA) are linker. Residues 251–456 (GVMLLDPSRF…QGWKRPVKKK (206 aa)) are N-acetyltransferase. UDP-N-acetyl-alpha-D-glucosamine-binding residues include arginine 333 and lysine 351. Histidine 363 functions as the Proton acceptor in the catalytic mechanism. UDP-N-acetyl-alpha-D-glucosamine-binding residues include tyrosine 366 and asparagine 377. Acetyl-CoA contacts are provided by residues alanine 380, 386–387 (NY), serine 405, alanine 423, and arginine 440.

This sequence in the N-terminal section; belongs to the N-acetylglucosamine-1-phosphate uridyltransferase family. The protein in the C-terminal section; belongs to the transferase hexapeptide repeat family. Homotrimer. It depends on Mg(2+) as a cofactor.

The protein localises to the cytoplasm. The enzyme catalyses alpha-D-glucosamine 1-phosphate + acetyl-CoA = N-acetyl-alpha-D-glucosamine 1-phosphate + CoA + H(+). It catalyses the reaction N-acetyl-alpha-D-glucosamine 1-phosphate + UTP + H(+) = UDP-N-acetyl-alpha-D-glucosamine + diphosphate. Its pathway is nucleotide-sugar biosynthesis; UDP-N-acetyl-alpha-D-glucosamine biosynthesis; N-acetyl-alpha-D-glucosamine 1-phosphate from alpha-D-glucosamine 6-phosphate (route II): step 2/2. The protein operates within nucleotide-sugar biosynthesis; UDP-N-acetyl-alpha-D-glucosamine biosynthesis; UDP-N-acetyl-alpha-D-glucosamine from N-acetyl-alpha-D-glucosamine 1-phosphate: step 1/1. It functions in the pathway bacterial outer membrane biogenesis; LPS lipid A biosynthesis. Its function is as follows. Catalyzes the last two sequential reactions in the de novo biosynthetic pathway for UDP-N-acetylglucosamine (UDP-GlcNAc). The C-terminal domain catalyzes the transfer of acetyl group from acetyl coenzyme A to glucosamine-1-phosphate (GlcN-1-P) to produce N-acetylglucosamine-1-phosphate (GlcNAc-1-P), which is converted into UDP-GlcNAc by the transfer of uridine 5-monophosphate (from uridine 5-triphosphate), a reaction catalyzed by the N-terminal domain. The protein is Bifunctional protein GlmU of Yersinia pseudotuberculosis serotype O:1b (strain IP 31758).